The following is a 239-amino-acid chain: ATP-dependent dethiobiotin synthetase BioD (239 aa).

15 to 20 provides a ligand contact to ATP; the sequence is EIGKTF. Thr19 contributes to the Mg(2+) binding site. The active site involves Lys40. Residues Asp57, 118–121, and 178–179 each bind ATP; these read EGAG and NH. Mg(2+)-binding residues include Asp57 and Glu118.

This sequence belongs to the dethiobiotin synthetase family. In terms of assembly, homodimer. Requires Mg(2+) as cofactor.

The protein localises to the cytoplasm. The catalysed reaction is (7R,8S)-7,8-diammoniononanoate + CO2 + ATP = (4R,5S)-dethiobiotin + ADP + phosphate + 3 H(+). Its pathway is cofactor biosynthesis; biotin biosynthesis; biotin from 7,8-diaminononanoate: step 1/2. In terms of biological role, catalyzes a mechanistically unusual reaction, the ATP-dependent insertion of CO2 between the N7 and N8 nitrogen atoms of 7,8-diaminopelargonic acid (DAPA, also called 7,8-diammoniononanoate) to form a ureido ring. In Burkholderia lata (strain ATCC 17760 / DSM 23089 / LMG 22485 / NCIMB 9086 / R18194 / 383), this protein is ATP-dependent dethiobiotin synthetase BioD.